The sequence spans 305 residues: Aspartate carbamoyltransferase catalytic subunit (305 aa).

Residues R58 and T59 each coordinate carbamoyl phosphate. K86 contributes to the L-aspartate binding site. Carbamoyl phosphate-binding residues include R108, H136, and Q139. L-aspartate contacts are provided by R169 and R223. Positions 264 and 265 each coordinate carbamoyl phosphate.

Belongs to the aspartate/ornithine carbamoyltransferase superfamily. ATCase family. Heterododecamer (2C3:3R2) of six catalytic PyrB chains organized as two trimers (C3), and six regulatory PyrI chains organized as three dimers (R2).

The catalysed reaction is carbamoyl phosphate + L-aspartate = N-carbamoyl-L-aspartate + phosphate + H(+). The protein operates within pyrimidine metabolism; UMP biosynthesis via de novo pathway; (S)-dihydroorotate from bicarbonate: step 2/3. Catalyzes the condensation of carbamoyl phosphate and aspartate to form carbamoyl aspartate and inorganic phosphate, the committed step in the de novo pyrimidine nucleotide biosynthesis pathway. This is Aspartate carbamoyltransferase catalytic subunit from Syntrophobacter fumaroxidans (strain DSM 10017 / MPOB).